The following is a 204-amino-acid chain: Elongation factor Ts (204 aa).

The tract at residues 80 to 83 (TDFV) is involved in Mg(2+) ion dislocation from EF-Tu.

It belongs to the EF-Ts family.

It localises to the cytoplasm. Its function is as follows. Associates with the EF-Tu.GDP complex and induces the exchange of GDP to GTP. It remains bound to the aminoacyl-tRNA.EF-Tu.GTP complex up to the GTP hydrolysis stage on the ribosome. This Thermoanaerobacter sp. (strain X514) protein is Elongation factor Ts.